The following is a 338-amino-acid chain: MLMKINEGKNYVELTVERVEDLFILYLILKPGDLVYSWTVREVRGRSGERFGREKVYLGVRVRDLEFHEPRGVLRIRGIIEDYPEWLEGAGGSYHSLEVGIGSTLKIMRSINRDYLEQLINTLSSGIKVLIVSVSIEETTVALATRLGVSIIATISNNYIQGKESGGSLINQRYIDDVSKVVRQLTEVHKPNALIIATQGMLMSSIPDIEVKGVPVERVIVSEGGLSGIYEVERRGYLDKVGLKLGYDTVNRIMEELSKGSGLVALGDEIYEALSMGAVDSLVMLDKLLIEKAEESRRIIDDCIRTRAKLIIVPDGSEAGKLLNGLGGLAALLRFRIK.

It belongs to the eukaryotic release factor 1 family. Pelota subfamily. As to quaternary structure, monomer. Requires a divalent metal cation as cofactor.

Its subcellular location is the cytoplasm. May function in recognizing stalled ribosomes, interact with stem-loop structures in stalled mRNA molecules, and effect endonucleolytic cleavage of the mRNA. May play a role in the release non-functional ribosomes and degradation of damaged mRNAs. Has endoribonuclease activity. In Caldivirga maquilingensis (strain ATCC 700844 / DSM 13496 / JCM 10307 / IC-167), this protein is Protein pelota homolog.